A 333-amino-acid polypeptide reads, in one-letter code: Holliday junction branch migration complex subunit RuvB (333 aa).

Residues 1–181 (MNDILNKEPM…FGISSHMEYY (181 aa)) are large ATPase domain (RuvB-L). ATP-binding positions include L20, R21, G62, K65, T66, T67, 128–130 (EDF), R171, Y181, and R218. T66 provides a ligand contact to Mg(2+). A small ATPAse domain (RuvB-S) region spans residues 182–252 (QERDLEEIVK…ITDKALSILD (71 aa)). The tract at residues 255-333 (AAGLDYIDQK…HLGYVYNEED (79 aa)) is head domain (RuvB-H). Residues R291, R310, and R315 each contribute to the DNA site.

It belongs to the RuvB family. As to quaternary structure, homohexamer. Forms an RuvA(8)-RuvB(12)-Holliday junction (HJ) complex. HJ DNA is sandwiched between 2 RuvA tetramers; dsDNA enters through RuvA and exits via RuvB. An RuvB hexamer assembles on each DNA strand where it exits the tetramer. Each RuvB hexamer is contacted by two RuvA subunits (via domain III) on 2 adjacent RuvB subunits; this complex drives branch migration. In the full resolvosome a probable DNA-RuvA(4)-RuvB(12)-RuvC(2) complex forms which resolves the HJ.

The protein localises to the cytoplasm. It catalyses the reaction ATP + H2O = ADP + phosphate + H(+). In terms of biological role, the RuvA-RuvB-RuvC complex processes Holliday junction (HJ) DNA during genetic recombination and DNA repair, while the RuvA-RuvB complex plays an important role in the rescue of blocked DNA replication forks via replication fork reversal (RFR). RuvA specifically binds to HJ cruciform DNA, conferring on it an open structure. The RuvB hexamer acts as an ATP-dependent pump, pulling dsDNA into and through the RuvAB complex. RuvB forms 2 homohexamers on either side of HJ DNA bound by 1 or 2 RuvA tetramers; 4 subunits per hexamer contact DNA at a time. Coordinated motions by a converter formed by DNA-disengaged RuvB subunits stimulates ATP hydrolysis and nucleotide exchange. Immobilization of the converter enables RuvB to convert the ATP-contained energy into a lever motion, pulling 2 nucleotides of DNA out of the RuvA tetramer per ATP hydrolyzed, thus driving DNA branch migration. The RuvB motors rotate together with the DNA substrate, which together with the progressing nucleotide cycle form the mechanistic basis for DNA recombination by continuous HJ branch migration. Branch migration allows RuvC to scan DNA until it finds its consensus sequence, where it cleaves and resolves cruciform DNA. The polypeptide is Holliday junction branch migration complex subunit RuvB (Lactococcus lactis subsp. lactis (strain IL1403) (Streptococcus lactis)).